Reading from the N-terminus, the 262-residue chain is Tryptophan synthase alpha chain (262 aa).

Active-site proton acceptor residues include Glu48 and Asp59.

It belongs to the TrpA family. As to quaternary structure, tetramer of two alpha and two beta chains.

It carries out the reaction (1S,2R)-1-C-(indol-3-yl)glycerol 3-phosphate + L-serine = D-glyceraldehyde 3-phosphate + L-tryptophan + H2O. It participates in amino-acid biosynthesis; L-tryptophan biosynthesis; L-tryptophan from chorismate: step 5/5. The alpha subunit is responsible for the aldol cleavage of indoleglycerol phosphate to indole and glyceraldehyde 3-phosphate. This chain is Tryptophan synthase alpha chain, found in Helicobacter pylori (strain P12).